A 312-amino-acid polypeptide reads, in one-letter code: tRNA dimethylallyltransferase (312 aa).

10 to 17 lines the ATP pocket; it reads GPTASGKS. 12–17 is a binding site for substrate; that stretch reads TASGKS. An interaction with substrate tRNA region spans residues 35–38; that stretch reads DSKQ.

Belongs to the IPP transferase family. Monomer. It depends on Mg(2+) as a cofactor.

It carries out the reaction adenosine(37) in tRNA + dimethylallyl diphosphate = N(6)-dimethylallyladenosine(37) in tRNA + diphosphate. Functionally, catalyzes the transfer of a dimethylallyl group onto the adenine at position 37 in tRNAs that read codons beginning with uridine, leading to the formation of N6-(dimethylallyl)adenosine (i(6)A). The polypeptide is tRNA dimethylallyltransferase (Anaplasma phagocytophilum (strain HZ)).